Consider the following 344-residue polypeptide: MNSNEIENFIYLNNTLLSEVPEPNSVFYTPKCFSNSKLPHQSDLEEPSSACSLSKNTIIDGGADEPYDSSDSCATFEFADFFKDNLDDFALDGPIININHVNQTSPYTHHNAEPLHDLQTFSSNLNHSNNRRQTICNFNMANDASKENETPYMVLNNKFNPVLTTEYTQQHLVQCKMVLENHITSRFPHFYTKLPDVSLVPNNMPHYPDEVTAKSAPKDDFYVPRFTRGHGISKLGLCPICSHQGEFIWLRTKTSAYWYHMNFVHGIHSKGRPYQPPIEFRTVRLRKTRNAIGVPNKKYMIEGKCHQCNKWIRCQGRKDVSVKIPEIFWWRHAHRCHIITTDLR.

It is found in the nucleus. This is Meiotic expression up-regulated protein 26 (meu26) from Schizosaccharomyces pombe (strain 972 / ATCC 24843) (Fission yeast).